We begin with the raw amino-acid sequence, 471 residues long: Threonine--tRNA ligase catalytic subunit (471 aa).

The interval 8 to 333 (THIDYAYELD…YLEHRRGRMP (326 aa)) is catalytic. Zn(2+)-binding residues include cysteine 112, histidine 166, and histidine 310.

The protein belongs to the class-II aminoacyl-tRNA synthetase family. In terms of assembly, homodimer. Probably interacts with its editing subunit. It depends on Zn(2+) as a cofactor.

The protein resides in the cytoplasm. It catalyses the reaction tRNA(Thr) + L-threonine + ATP = L-threonyl-tRNA(Thr) + AMP + diphosphate + H(+). In terms of biological role, catalyzes the attachment of threonine to tRNA(Thr) in a two-step reaction: L-threonine is first activated by ATP to form Thr-AMP and then transferred to the acceptor end of tRNA(Thr). This protein is probably not able to deacylate mischarged L-seryl-tRNA(Thr) as it lacks the appropriate domain. In Aeropyrum pernix (strain ATCC 700893 / DSM 11879 / JCM 9820 / NBRC 100138 / K1), this protein is Threonine--tRNA ligase catalytic subunit.